The following is a 130-amino-acid chain: Small ribosomal subunit protein uS11 (130 aa).

The protein belongs to the universal ribosomal protein uS11 family. As to quaternary structure, part of the 30S ribosomal subunit. Interacts with proteins S7 and S18. Binds to IF-3.

In terms of biological role, located on the platform of the 30S subunit, it bridges several disparate RNA helices of the 16S rRNA. Forms part of the Shine-Dalgarno cleft in the 70S ribosome. The chain is Small ribosomal subunit protein uS11 from Xanthomonas oryzae pv. oryzae (strain MAFF 311018).